The chain runs to 274 residues: HTH-type transcriptional regulator GadX (274 aa).

The HTH araC/xylS-type domain maps to 145-242; the sequence is TRVCTVINNN…GMTPTEYQER (98 aa). DNA-binding regions (H-T-H motif) lie at residues 162–183 and 209–232; these read ARIASELLMSPSLLKKKLREEE and IKRVAVSCGYHSVSYFIYVFRNYY.

In terms of assembly, homodimer.

Functionally, positively regulates the expression of about fifteen genes involved in acid resistance such as gadA, gadB and gadC. Depending on the conditions (growth phase and medium), can repress gadW. The chain is HTH-type transcriptional regulator GadX (gadX) from Escherichia coli (strain K12).